Here is a 402-residue protein sequence, read N- to C-terminus: Digeranylgeranylglycerophospholipid reductase (402 aa).

Residues Gly15, Glu34, Cys45, Ala46, Gly48, Arg99, Ala123, Asp280, Gly292, and Ile293 each contribute to the FAD site.

Belongs to the geranylgeranyl reductase family. DGGGPL reductase subfamily. It depends on FAD as a cofactor.

It carries out the reaction a 2,3-bis-O-phytanyl-sn-glycerol 1-phospholipid + 8 oxidized 2[4Fe-4S]-[ferredoxin] = a 2,3-bis-O-(geranylgeranyl)-sn-glycerol 1-phospholipid + 8 reduced 2[4Fe-4S]-[ferredoxin] + 16 H(+). The catalysed reaction is 2,3-bis-O-(phytanyl)-sn-glycerol 1-phosphate + 8 oxidized 2[4Fe-4S]-[ferredoxin] = 2,3-bis-O-(geranylgeranyl)-sn-glycerol 1-phosphate + 8 reduced 2[4Fe-4S]-[ferredoxin] + 16 H(+). The enzyme catalyses a 2,3-bis-O-phytanyl-sn-glycerol 1-phospholipid + 8 A = a 2,3-bis-O-(geranylgeranyl)-sn-glycerol 1-phospholipid + 8 AH2. It catalyses the reaction CDP-2,3-bis-O-(geranylgeranyl)-sn-glycerol + 8 AH2 = CDP-2,3-bis-O-(phytanyl)-sn-glycerol + 8 A. It carries out the reaction archaetidylserine + 8 AH2 = 2,3-bis-O-phytanyl-sn-glycero-3-phospho-L-serine + 8 A. It functions in the pathway membrane lipid metabolism; glycerophospholipid metabolism. Is involved in the reduction of 2,3-digeranylgeranylglycerophospholipids (unsaturated archaeols) into 2,3-diphytanylglycerophospholipids (saturated archaeols) in the biosynthesis of archaeal membrane lipids. Catalyzes the formation of archaetidic acid (2,3-di-O-phytanyl-sn-glyceryl phosphate) from 2,3-di-O-geranylgeranylglyceryl phosphate (DGGGP) via the hydrogenation of each double bond of the isoprenoid chains. Is also probably able to reduce double bonds of geranyl groups in CDP-2,3-bis-O-(geranylgeranyl)-sn-glycerol and archaetidylserine, thus acting at various stages in the biosynthesis of archaeal membrane lipids. This is Digeranylgeranylglycerophospholipid reductase from Methanospirillum hungatei JF-1 (strain ATCC 27890 / DSM 864 / NBRC 100397 / JF-1).